We begin with the raw amino-acid sequence, 602 residues long: Protein nessun dorma (602 aa).

Positions 188–208 form a coiled coil; the sequence is AEAKYIQQRLDYLELDLSDAE.

In terms of assembly, interacts (via N-terminus) with both members of the centralspindlin complex, Pav and Tum. As to expression, detected in testis (at protein level). Also expressed in ovary.

The protein localises to the midbody. Functionally, required during male meiosis for completion of spermatocyte cytokinesis and possibly also required in female germline cells. Also involved in ring canal formation in male and female germline cells. Not essential for cleavage furrow ingression but is required for contractile ring stability and the attachment of the furrowing membrane to the actomyosin ring in late telophase. Displays high binding affinity for beta-galactosides. The sequence is that of Protein nessun dorma from Drosophila melanogaster (Fruit fly).